The sequence spans 834 residues: Protein Jade-1 (834 aa).

Residues 1 to 46 (MKRGRLPSSSEDSDDNGSLSTTWSQHSRSQHGRSSTCSRPEDRKPS) form a disordered region. Low complexity predominate over residues 24–35 (SQHSRSQHGRSS). The segment at 61–81 (DSYQLNPDDYYVLADPWRQEW) is interaction with KAT7/HBO1 and histones. Residues 81–189 (WEKGVQVPVS…EQRCYDNMNH (109 aa)) form an interaction with histones region. S90 carries the post-translational modification Phosphoserine. A Phosphothreonine modification is found at T93. A Glycyl lysine isopeptide (Lys-Gly) (interchain with G-Cter in SUMO2) cross-link involves residue K115. The PHD-type 1 zinc-finger motif lies at 204–254 (DVVCDVCQSPDGEDGNEMVFCDKCNICVHQACYGILKVPEGSWLCRTCALG). Residues 256–290 (QPKCLLCPKKGGAMKPTRSGTKWVHVSCALWIPEV) form a C2HC pre-PHD-type zinc finger. The PHD-type 2 zinc finger occupies 314–370 (LVCSLCNEKFGASIQCSVKNCRTAFHVTCAFDRGLEMKTILAENDEVKFKSYCPKHS). The disordered stretch occupies residues 367-409 (PKHSSHRKPEEGLGEGAAQENGAPESSPQSPLEPYGSLEPNRE). K573 is covalently cross-linked (Glycyl lysine isopeptide (Lys-Gly) (interchain with G-Cter in SUMO2)). 2 disordered regions span residues 589–621 (HPLK…CGRR) and 676–716 (DKSF…GTRK). S603 carries the post-translational modification Phosphoserine. K609 carries the post-translational modification N6-acetyllysine. A phosphoserine mark is found at S704 and S735. Positions 738-819 (KSWGGFRIPK…EKKCIHASST (82 aa)) are disordered. Composition is skewed to basic and acidic residues over residues 747–768 (KKGE…HSDC) and 777–790 (PAKE…RADS).

Belongs to the JADE family. Component of the HBO1 complex composed at least of ING4 or ING5, KAT7/HBO1, MEAF6, and one of JADE1, JADE2 and JADE3. Interacts with NPHP4. Highly expressed in kidney. Also present in liver (at protein level).

Its subcellular location is the nucleus. The protein resides in the chromosome. It localises to the cytoplasm. It is found in the cytoskeleton. The protein localises to the cilium basal body. Its function is as follows. Scaffold subunit of some HBO1 complexes, which have a histone H4 acetyltransferase activity. Plays a key role in HBO1 complex by directing KAT7/HBO1 specificity towards histone H4 acetylation (H4K5ac, H4K8ac and H4K12ac), regulating DNA replication initiation, regulating DNA replication initiation. May also promote acetylation of nucleosomal histone H4 by KAT5. Promotes apoptosis. May act as a renal tumor suppressor. Negatively regulates canonical Wnt signaling; at least in part, cooperates with NPHP4 in this function. The polypeptide is Protein Jade-1 (Jade1) (Mus musculus (Mouse)).